The following is a 119-amino-acid chain: Large ribosomal subunit protein bL20 (119 aa).

The protein belongs to the bacterial ribosomal protein bL20 family.

Binds directly to 23S ribosomal RNA and is necessary for the in vitro assembly process of the 50S ribosomal subunit. It is not involved in the protein synthesizing functions of that subunit. The sequence is that of Large ribosomal subunit protein bL20 from Granulibacter bethesdensis (strain ATCC BAA-1260 / CGDNIH1).